The sequence spans 847 residues: KN motif and ankyrin repeat domain-containing protein 2 (847 aa).

The interval 1 to 32 (MAQVLHVPAPFPGTPGQASSAAFPNKEPDPPY) is disordered. The interval 1 to 72 (MAQVLHVPAP…PVQRRPRLGS (72 aa)) is interaction with AIFM1. Phosphoserine is present on residues Ser-19, Ser-83, Ser-86, Ser-89, and Ser-92. Position 105 is an omega-N-methylarginine (Arg-105). The tract at residues 161-182 (LAGVGLLPPTPRSSGLSTPVAP) is disordered. Thr-170 is subject to Phosphothreonine. 2 coiled-coil regions span residues 187-207 (LAHVREQMAGALRKLRQLEEQ) and 284-311 (EAALVAKVAVLETQLKKALQELRAAQTQ). Residue Thr-331 is modified to Phosphothreonine. A Phosphoserine modification is found at Ser-358. Disordered regions lie at residues 414-473 (GAAR…GGAS) and 502-581 (NGGY…PEEE). The segment covering 420–433 (DPPPSPAEPSPSSP) has biased composition (pro residues). Low complexity-rich tracts occupy residues 434-446 (YPAAEPENPAPAA) and 506-516 (ESSSEDSSTAE). Position 536 is a phosphoserine (Ser-536). The ANK 0; degenerate repeat unit spans residues 610–647 (RELKVAYTTVLQEWLRLACRSDAHPELVRRHLVTFRAM). ANK repeat units lie at residues 662–692 (NGNTALHYSVSHANFPVVRQLLDSGVCQVDK), 696–729 (AGYSPIMLTALATLKTQDDIDTILQLFRLGNVNA), 734–763 (AGQTALMLAVSHGRVDVVKALLACEVDVNM), 767–797 (DGSTALMCACEHGHKEITGLLLAVPSCDISL), and 801–831 (DGSTALMVALDAGQSEIASMLYSRMNIKCSF). Residues 665 to 831 (TALHYSVSHA…YSRMNIKCSF (167 aa)) are interaction with NCOA1.

As to quaternary structure, interacts (non-phosphorylated form) with NCOA1; NCOA2 AND NCOA3. Interacts with AIFM1. Interacts with ARHGDIA; the interaction is direct and may regulate the interaction of ARHGDIA with RHOA, RAC1 and CDC42. Interacts (via ANK repeats 1-5) with KIF21A. Post-translationally, phosphorylated by casein kinase II upon estrogen stimulation. Phosphorylation induces the release by KANK2 of NCOA1 and its translocation to the nucleus where NCOA1 can activate gene transcription. In terms of tissue distribution, expressed by podocytes in kidney glomeruli (at protein level).

The protein resides in the cytoplasm. The protein localises to the mitochondrion. In terms of biological role, involved in transcription regulation by sequestering in the cytoplasm nuclear receptor coactivators such as NCOA1, NCOA2 and NCOA3. Involved in regulation of caspase-independent apoptosis by sequestering the proapoptotic factor AIFM1 in mitochondria. Pro-apoptotic stimuli can induce its proteasomal degradation allowing the translocation of AIFM1 to the nucleus to induce apoptosis. Involved in the negative control of vitamin D receptor signaling pathway. Involved in actin stress fibers formation through its interaction with ARHGDIA and the regulation of the Rho signaling pathway. May thereby play a role in cell adhesion and migration, regulating for instance podocytes migration during development of the kidney. Through the Rho signaling pathway may also regulate cell proliferation. This Rattus norvegicus (Rat) protein is KN motif and ankyrin repeat domain-containing protein 2.